A 305-amino-acid chain; its full sequence is NAD kinase (305 aa).

Catalysis depends on aspartate 84, which acts as the Proton acceptor. Residues 84–85 (DG), 159–160 (NE), histidine 170, arginine 187, aspartate 189, 200–205 (TAYSLS), and glutamine 260 contribute to the NAD(+) site.

It belongs to the NAD kinase family. It depends on a divalent metal cation as a cofactor.

Its subcellular location is the cytoplasm. The catalysed reaction is NAD(+) + ATP = ADP + NADP(+) + H(+). Functionally, involved in the regulation of the intracellular balance of NAD and NADP, and is a key enzyme in the biosynthesis of NADP. Catalyzes specifically the phosphorylation on 2'-hydroxyl of the adenosine moiety of NAD to yield NADP. The protein is NAD kinase of Pasteurella multocida (strain Pm70).